A 2458-amino-acid chain; its full sequence is Acetyl-CoA carboxylase 2 (2458 aa).

Ser-35 carries the phosphoserine modification. The segment at 35 to 155 is disordered; sequence SKSEANLIPS…SPSKEDKKQA (121 aa). The segment covering 51–60 has biased composition (polar residues); it reads SDNSGETPQR. Thr-70 carries the post-translational modification Phosphothreonine. Positions 77–87 are enriched in basic and acidic residues; that stretch reads ASHKGPKDAGR. 2 positions are modified to phosphoserine: Ser-91 and Ser-95. A compositionally biased stretch (polar residues) spans 103-146; that stretch reads PLSSSDAAPSPELQANGTGTQGLEATDTNGLSSSARPQGQQAGS. Phosphoserine occurs at positions 169, 175, 192, 195, and 200. The interval 174 to 193 is disordered; that stretch reads SSDEDSVAGSSRESTRKGSR. Thr-207 carries the post-translational modification Phosphothreonine. Ser-220 carries the phosphoserine modification. Ser-222 bears the Phosphoserine; by AMPK mark. One can recognise a Biotin carboxylation domain in the interval 259-761; sequence VIEKVLIANN…DTGWLDYLIA (503 aa). In terms of domain architecture, ATP-grasp spans 414–609; that stretch reads DDLQQGKRIS…LPAAQLQIAM (196 aa). 458 to 463 contacts ATP; sequence GGGGKG. Ser-469 bears the Phosphoserine mark. Mg(2+) is bound by residues Glu-567, Glu-580, and Asn-582. Positions 567, 580, and 582 each coordinate Mn(2+). Arg-584 is an active-site residue. The residue at position 753 (Thr-753) is a Phosphothreonine. Residues 888–962 form the Biotinyl-binding domain; it reads FEKENDPTVL…EAGCVVARLE (75 aa). Lys-929 is subject to N6-biotinyllysine. Residue Ser-1340 is modified to Phosphoserine. Position 1342 is a phosphothreonine (Thr-1342). Ser-1360 and Ser-1405 each carry phosphoserine. The CoA carboxyltransferase N-terminal domain occupies 1695 to 2025; that stretch reads PYVTKDLLQA…DNHSPVPIIT (331 aa). The carboxyltransferase stretch occupies residues 1695–2345; sequence PYVTKDLLQA…EDQVKQEILQ (651 aa). CoA contacts are provided by Arg-1934, Lys-2238, and Arg-2240. One can recognise a CoA carboxyltransferase C-terminal domain in the interval 2029-2345; sequence PIDREIEFLP…EDQVKQEILQ (317 aa).

In terms of assembly, monomer, homodimer, and homotetramer. Forms filamentous polymers. Interacts with MID1IP1; interaction with MID1IP1 promotes oligomerization and increases its activity in a citrate-dependent manner. Requires biotin as cofactor. It depends on Mg(2+) as a cofactor. The cofactor is Mn(2+). The biotin cofactor is covalently attached to the central biotinyl-binding domain and is required for the catalytic activity. In terms of processing, phosphorylation at Ser-222 by AMPK inactivates the enzyme. Required for the maintenance of skeletal muscle lipid and glucose homeostasis. In terms of tissue distribution, widely expressed with highest levels in heart, skeletal muscle, liver, adipose tissue, mammary gland, adrenal gland and colon. Isoform 3 is expressed in skeletal muscle, adipose tissue and liver (at protein level). Isoform 3 is detected at high levels in adipose tissue with lower levels in heart, liver, skeletal muscle and testis.

It localises to the mitochondrion. The catalysed reaction is hydrogencarbonate + acetyl-CoA + ATP = malonyl-CoA + ADP + phosphate + H(+). Its pathway is lipid metabolism; malonyl-CoA biosynthesis; malonyl-CoA from acetyl-CoA: step 1/1. Activity is increased by oligomerization of the protein into filaments. The oligomerization and the activity of the enzyme are inhibited by phosphorylation at Ser-222. Inhibited by its product, malonyl-CoA. Activated by citrate. Activation by MID1IP1 is citrate-dependent. Soraphen A, inhibits the enzyme by preventing the formation of active filamentous oligomers. Its function is as follows. Mitochondrial enzyme that catalyzes the carboxylation of acetyl-CoA to malonyl-CoA and plays a central role in fatty acid metabolism. Catalyzes a 2 steps reaction starting with the ATP-dependent carboxylation of the biotin carried by the biotin carboxyl carrier (BCC) domain followed by the transfer of the carboxyl group from carboxylated biotin to acetyl-CoA. Through the production of malonyl-CoA that allosterically inhibits carnitine palmitoyltransferase 1 at the mitochondria, negatively regulates fatty acid oxidation. Together with its cytosolic isozyme ACACA, which is involved in de novo fatty acid biosynthesis, promotes lipid storage. The protein is Acetyl-CoA carboxylase 2 of Homo sapiens (Human).